Reading from the N-terminus, the 344-residue chain is Phosphate acyltransferase (344 aa).

Belongs to the PlsX family. As to quaternary structure, homodimer. Probably interacts with PlsY.

It is found in the cytoplasm. The catalysed reaction is a fatty acyl-[ACP] + phosphate = an acyl phosphate + holo-[ACP]. Its pathway is lipid metabolism; phospholipid metabolism. Catalyzes the reversible formation of acyl-phosphate (acyl-PO(4)) from acyl-[acyl-carrier-protein] (acyl-ACP). This enzyme utilizes acyl-ACP as fatty acyl donor, but not acyl-CoA. This chain is Phosphate acyltransferase, found in Cyanothece sp. (strain PCC 7425 / ATCC 29141).